The chain runs to 467 residues: ATP synthase subunit beta (467 aa).

152–159 (GGAGVGKT) is a binding site for ATP.

The protein belongs to the ATPase alpha/beta chains family. In terms of assembly, F-type ATPases have 2 components, CF(1) - the catalytic core - and CF(0) - the membrane proton channel. CF(1) has five subunits: alpha(3), beta(3), gamma(1), delta(1), epsilon(1). CF(0) has three main subunits: a(1), b(2) and c(9-12). The alpha and beta chains form an alternating ring which encloses part of the gamma chain. CF(1) is attached to CF(0) by a central stalk formed by the gamma and epsilon chains, while a peripheral stalk is formed by the delta and b chains.

It is found in the cell membrane. It carries out the reaction ATP + H2O + 4 H(+)(in) = ADP + phosphate + 5 H(+)(out). Its function is as follows. Produces ATP from ADP in the presence of a proton gradient across the membrane. The catalytic sites are hosted primarily by the beta subunits. The sequence is that of ATP synthase subunit beta from Caldicellulosiruptor saccharolyticus (strain ATCC 43494 / DSM 8903 / Tp8T 6331).